Reading from the N-terminus, the 252-residue chain is 5-oxoprolinase subunit A (252 aa).

The protein belongs to the LamB/PxpA family. As to quaternary structure, forms a complex composed of PxpA, PxpB and PxpC.

It catalyses the reaction 5-oxo-L-proline + ATP + 2 H2O = L-glutamate + ADP + phosphate + H(+). In terms of biological role, catalyzes the cleavage of 5-oxoproline to form L-glutamate coupled to the hydrolysis of ATP to ADP and inorganic phosphate. The polypeptide is 5-oxoprolinase subunit A (Staphylococcus carnosus (strain TM300)).